Here is a 154-residue protein sequence, read N- to C-terminus: Putative antiporter subunit mnhG2 (154 aa).

3 helical membrane-spanning segments follow: residues 11–31 (IASILIFLGSIIALISAIGIV), 51–71 (VLLTVVGVLIYFIVNSGFFSV), and 72–92 (RLLLSLVFINLTSPVGMHLIS).

It belongs to the CPA3 antiporters (TC 2.A.63) subunit G family. In terms of assembly, may form a heterooligomeric complex that consists of seven subunits: mnhA2, mnhB2, mnhC2, mnhD2, mnhE2, mnhF2 and mnhG2.

It localises to the cell membrane. The polypeptide is Putative antiporter subunit mnhG2 (mnhG2) (Staphylococcus epidermidis (strain ATCC 35984 / DSM 28319 / BCRC 17069 / CCUG 31568 / BM 3577 / RP62A)).